The chain runs to 330 residues: Exostosin-like 2 (330 aa).

The Cytoplasmic portion of the chain corresponds to 1-21; that stretch reads MMRGCHICKLPGRVMGIRVLR. A helical; Signal-anchor for type II membrane protein transmembrane segment spans residues 22-42; the sequence is FSLVVILVLLLVAGALTNLLP. The Lumenal portion of the chain corresponds to 43–330; that stretch reads NIKEDKMLTL…FPYANHKSKM (288 aa). Glutamine 72 provides a ligand contact to UDP-N-acetyl-alpha-D-galactosamine. Glutamine 72 contacts UDP-N-acetyl-alpha-D-glucosamine. N-linked (GlcNAc...) asparagine glycosylation occurs at asparagine 75. Residues arginine 76, asparagine 101, asparagine 130, arginine 135, aspartate 151, aspartate 152, aspartate 153, and aspartate 245 each contribute to the UDP-N-acetyl-alpha-D-galactosamine site. Arginine 76, asparagine 101, asparagine 130, arginine 135, aspartate 151, aspartate 152, aspartate 153, aspartate 245, aspartate 246, and arginine 293 together coordinate UDP-N-acetyl-alpha-D-glucosamine. Aspartate 153 serves as a coordination point for Mn(2+). Residues cysteine 244 and cysteine 296 are joined by a disulfide bond. Aspartate 246 is a catalytic residue. Residue arginine 293 coordinates UDP-N-acetyl-alpha-D-galactosamine.

Belongs to the glycosyltransferase 47 family. Requires Mn(2+) as cofactor.

The protein localises to the endoplasmic reticulum membrane. The catalysed reaction is 3-O-(beta-D-GlcA-(1-&gt;3)-beta-D-Gal-(1-&gt;3)-beta-D-Gal-(1-&gt;4)-beta-D-Xyl)-L-seryl-[protein] + UDP-N-acetyl-alpha-D-glucosamine = 3-O-(alpha-D-GlcNAc-(1-&gt;4)-beta-D-GlcA-(1-&gt;3)-beta-D-Gal-(1-&gt;3)-beta-D-Gal-(1-&gt;4)-beta-D-Xyl)-L-seryl-[protein] + UDP + H(+). In terms of biological role, glycosyltransferase required for the biosynthesis of heparan-sulfate and responsible for the alternating addition of beta-1-4-linked glucuronic acid (GlcA) and alpha-1-4-linked N-acetylglucosamine (GlcNAc) units to nascent heparan sulfate chains. This is Exostosin-like 2 (Extl2) from Mus musculus (Mouse).